Reading from the N-terminus, the 159-residue chain is Early E3 18.5 kDa glycoprotein (159 aa).

The signal sequence occupies residues 1–17 (MRYMILGLLALAAVCSA). Residues 18–123 (AKKVEFKEPA…PPQKCLENTG (106 aa)) are Lumenal-facing. 2 cysteine pairs are disulfide-bonded: C28/C45 and C39/C100. 2 N-linked (GlcNAc...) asparagine; by host glycosylation sites follow: N29 and N78. Residues 124-144 (TFCSTALLITALALVCTLLYL) traverse the membrane as a helical segment. Residues 145–159 (KYKSRRSFIDEKKMP) lie on the Cytoplasmic side of the membrane. The short motif at 156–159 (KKMP) is the Di-lysine motif element.

This sequence belongs to the adenoviridae E19 family. In terms of processing, both disulfide bonds are absolutely critical for the interaction with MHC antigens. Post-translationally, N-glycosylated; high-mannose.

It is found in the host endoplasmic reticulum membrane. Its function is as follows. Binds and retains class I heavy chains in the endoplasmic reticulum during the early period of virus infection, thereby impairing their transport to the cell surface. Also delays the expression of class I alleles that it cannot affect by direct retention. Binds transporters associated with antigen processing (TAP) and acts as a tapasin inhibitor, preventing class I/TAP association. In consequence, infected cells are masked for immune recognition by cytotoxic T-lymphocytes. The chain is Early E3 18.5 kDa glycoprotein from Homo sapiens (Human).